The sequence spans 288 residues: 4-diphosphocytidyl-2-C-methyl-D-erythritol kinase (288 aa).

The active site involves lysine 11. Position 100 to 110 (100 to 110) interacts with ATP; it reads PTSAGLGSGSS. Residue aspartate 140 is part of the active site.

The protein belongs to the GHMP kinase family. IspE subfamily.

It catalyses the reaction 4-CDP-2-C-methyl-D-erythritol + ATP = 4-CDP-2-C-methyl-D-erythritol 2-phosphate + ADP + H(+). It functions in the pathway isoprenoid biosynthesis; isopentenyl diphosphate biosynthesis via DXP pathway; isopentenyl diphosphate from 1-deoxy-D-xylulose 5-phosphate: step 3/6. Functionally, catalyzes the phosphorylation of the position 2 hydroxy group of 4-diphosphocytidyl-2C-methyl-D-erythritol. The chain is 4-diphosphocytidyl-2-C-methyl-D-erythritol kinase from Wolbachia sp. subsp. Brugia malayi (strain TRS).